The sequence spans 20 residues: Collagenolytic protease 36 kDa C (20 aa).

Residues 1–20 form the Peptidase S1 domain; the sequence is IVGGSEATSGQFPYQXSFQD. The disordered stretch occupies residues 1-20; that stretch reads IVGGSEATSGQFPYQXSFQD.

The protein belongs to the peptidase S1 family.

The enzyme catalyses Hydrolysis of proteins, with broad specificity for peptide bonds. Native collagen is cleaved about 75% of the length of the molecule from the N-terminus. Low activity on small molecule substrates of both trypsin and chymotrypsin.. Its function is as follows. This enzyme is a serine protease capable of degrading the native triple helix of collagen. This is Collagenolytic protease 36 kDa C from Paralithodes camtschaticus (Red king crab).